The sequence spans 317 residues: Melanocyte-stimulating hormone receptor (317 aa).

Topologically, residues 1–37 (MPALGSQRRLLGSLNCTPPATLPFTLAPNRTGPQCLE) are extracellular. N29 is a glycosylation site (N-linked (GlcNAc...) asparagine). A helical transmembrane segment spans residues 38-63 (VSIPDGLFLSLGLVSLVENVLVVAAI). Topologically, residues 64 to 72 (AKNRNLHSP) are cytoplasmic. The chain crosses the membrane as a helical span at residues 73 to 93 (MYYFICCLAVSDLLVSVSNVL). Residues 94 to 118 (ETAVMLLLEAGVLATQAAVVQQLDN) lie on the Extracellular side of the membrane. Residues 119 to 140 (VIDVLICGSMVSSLCFLGAIAV) traverse the membrane as a helical segment. Residues 141–163 (DRYISIFYALRYHSVVTLPRAWR) lie on the Cytoplasmic side of the membrane. The chain crosses the membrane as a helical span at residues 164-183 (IIAAIWVASILTSLLFITYY). Over 184–191 (NHKVILLC) the chain is Extracellular. The chain crosses the membrane as a helical span at residues 192–211 (LVGLFIAMLALMAVLYVHML). Residues 212-240 (ARACQHARGIARLQKRQRPIHQGFGLKGA) are Cytoplasmic-facing. A helical transmembrane segment spans residues 241-266 (ATLTILLGVFFLCWGPFFLHLSLIVL). Over 267-279 (CPQHPTCGCIFKN) the chain is Extracellular. A helical membrane pass occupies residues 280–300 (FNLFLALIICNAIVDPLIYAF). Residues 301–317 (RSQELRKTLQEVLQCSW) are Cytoplasmic-facing. The S-palmitoyl cysteine moiety is linked to residue C315.

The protein belongs to the G-protein coupled receptor 1 family. As to quaternary structure, interacts with MGRN1, but does not undergo MGRN1-mediated ubiquitination; this interaction competes with GNAS-binding and thus inhibits agonist-induced cAMP production. Interacts with OPN3; the interaction results in a decrease in MC1R-mediated cAMP signaling and ultimately a decrease in melanin production in melanocytes. In terms of tissue distribution, highly expressed in the testis.

The protein localises to the cell membrane. In terms of biological role, receptor for MSH (alpha, beta) and ACTH. Does not seem to be active with gamma-MSH. The activity of this receptor is mediated by G proteins which activate adenylate cyclase. Mediates melanogenesis, the production of eumelanin (black/brown) and phaeomelanin (red/yellow), via regulation of cAMP signaling in melanocytes. In Bos taurus (Bovine), this protein is Melanocyte-stimulating hormone receptor (MC1R).